Consider the following 573-residue polypeptide: Protein DSE1 (573 aa).

4 WD repeats span residues 144–185 (DFPP…GCAK), 315–351 (RKNT…GKPV), 356–395 (AKKG…NMKY), and 397–448 (ELVH…NGKG). Over residues 500–509 (SDSSMLSLSN) the composition is skewed to low complexity. The disordered stretch occupies residues 500 to 519 (SDSSMLSLSNESDHSMTETS). Lys-553 is covalently cross-linked (Glycyl lysine isopeptide (Lys-Gly) (interchain with G-Cter in ubiquitin)).

The protein belongs to the WD repeat DSE1 family.

The protein resides in the bud neck. Its function is as follows. Involved in cell wall metabolism and required for the separation of the mother and daughter cells. The protein is Protein DSE1 (DSE1) of Saccharomyces cerevisiae (strain ATCC 204508 / S288c) (Baker's yeast).